Here is a 417-residue protein sequence, read N- to C-terminus: uncharacterized protein (417 aa).

2 disordered regions span residues 44 to 83 (FTNEQNEEDSSNYSTSGYDSSAETISANSSPINRSGVRSR) and 325 to 346 (VQSARKNQKKGRKNRKVEPPKE). Residues 54 to 64 (SNYSTSGYDSS) are compositionally biased toward low complexity. The segment covering 65 to 76 (AETISANSSPIN) has biased composition (polar residues). The span at 326-339 (QSARKNQKKGRKNR) shows a compositional bias: basic residues. The helical transmembrane segment at 362 to 382 (FLIIGVYVLVFIYVCTNVLTV) threads the bilayer.

The protein localises to the membrane. This is an uncharacterized protein from Caenorhabditis elegans.